The sequence spans 149 residues: Macrodomain Ter protein (149 aa).

Belongs to the MatP family. In terms of assembly, homodimer.

It localises to the cytoplasm. Its function is as follows. Required for spatial organization of the terminus region of the chromosome (Ter macrodomain) during the cell cycle. Prevents early segregation of duplicated Ter macrodomains during cell division. Binds specifically to matS, which is a 13 bp signature motif repeated within the Ter macrodomain. This chain is Macrodomain Ter protein, found in Vibrio cholerae serotype O1 (strain ATCC 39315 / El Tor Inaba N16961).